The following is a 1136-amino-acid chain: Probable phospholipid-transporting ATPase IIB (1136 aa).

Residues 1–145 (MADQIPLYPV…IKNQKYNIFT (145 aa)) lie on the Cytoplasmic side of the membrane. The chain crosses the membrane as a helical span at residues 146-166 (FIPGVLYEQFKFFLNLYFLIV). Residues 167 to 174 (SCSQFVPA) lie on the Extracellular side of the membrane. A helical membrane pass occupies residues 175 to 195 (LKIGYLYTYWAPLGFVLAVTI). At 196–383 (MREAVDEFRR…LDLELNQLTK (188 aa)) the chain is on the cytoplasmic side. The chain crosses the membrane as a helical span at residues 384–404 (ALFLALVALSVVMVTLQGFAG). Residues 405 to 408 (PWYR) are Extracellular-facing. A helical transmembrane segment spans residues 409–429 (SLFRFLLLFSYIIPISLRVNL). At 430–939 (DMGKAAYGWM…ALGQFVMHRG (510 aa)) the chain is on the cytoplasmic side. The active-site 4-aspartylphosphate intermediate is the Asp469. Residues Asp469, Lys470, and Thr471 each coordinate ATP. Position 469 (Asp469) interacts with Mg(2+). Residue Thr471 coordinates Mg(2+). Positions 514–538 (AGGSSAASTPPRKAPSSAPKVRRSV) are disordered. ATP-binding residues include Glu591, Phe633, Lys638, Lys657, Arg686, Thr687, Thr766, Gly767, Asp768, Arg848, and Lys854. Asp874 serves as a coordination point for Mg(2+). Asn877 and Asp878 together coordinate ATP. Asp878 contributes to the Mg(2+) binding site. The chain crosses the membrane as a helical span at residues 940 to 960 (LIISTMQAVFSSVFYFASVPL). The Extracellular segment spans residues 961–962 (YQ). A helical transmembrane segment spans residues 963–983 (GFLMVGYATVYTMFPVFSLVL). Residues 984–1012 (DQDVKPEMAMLYPELYKDLTKGRSLSFKT) are Cytoplasmic-facing. A helical transmembrane segment spans residues 1013-1033 (FLVWVLISIYQGGILMFGALV). At 1034–1041 (LFESEFVH) the chain is on the extracellular side. Residues 1042-1062 (VVAISFTALVLTELLMVALTV) form a helical membrane-spanning segment. Residues 1063-1066 (RTWH) are Cytoplasmic-facing. A helical transmembrane segment spans residues 1067 to 1087 (WLMVVAQLLSLGCYVASLAFL). Residues 1088–1098 (NEYFDVAFITT) lie on the Extracellular side of the membrane. Residues 1099 to 1119 (VTFVWKVSAITVVSCLPLYVL) traverse the membrane as a helical segment. The Cytoplasmic portion of the chain corresponds to 1120–1136 (KYLKRKLSPPSYSKLSS).

Belongs to the cation transport ATPase (P-type) (TC 3.A.3) family. Type IV subfamily. The cofactor is Mg(2+).

The protein localises to the golgi apparatus. It is found in the trans-Golgi network membrane. It catalyses the reaction ATP + H2O + phospholipidSide 1 = ADP + phosphate + phospholipidSide 2.. The protein is Probable phospholipid-transporting ATPase IIB (ATP9B) of Bos taurus (Bovine).